A 302-amino-acid chain; its full sequence is uncharacterized protein (302 aa).

The next 10 membrane-spanning stretches (helical) occupy residues 13-32 (GILLAISAYTMWGIAPIYFK), 42-64 (ILSHRVVWSFVLLAVLIHLGRRW), 77-96 (FWLLLVTALLVGGNWLIFIW), 106-125 (ASLGYYINPLLNVLLGMLFL), 132-150 (LQWFAVALAAIGVGIQLVV), 154-171 (VPIVAIALATSFGFYGLL), 183-202 (LFLETLFMLPAAAIYLIWLA), 217-239 (NLLLVCAGVVTTLPLLCFTGAAA), 246-265 (LGFFQYIGPSLMFLLAVLVY), and 275-297 (ITFAFIWSALVIFSVDGLKAGHA). The EamA domain maps to 22–149 (TMWGIAPIYF…AAIGVGIQLV (128 aa)).

This sequence belongs to the EamA transporter family.

It localises to the cell membrane. This is an uncharacterized protein from Vibrio cholerae serotype O1 (strain ATCC 39315 / El Tor Inaba N16961).